Here is a 2094-residue protein sequence, read N- to C-terminus: MEKKKKIIREVLRSGKVQNPQYLFNLWTNCNSFRLSTKIIFNWEHLIKLLDPRIIILLIPRDIRGFRSHISFICLVLFTLPIFMHGFNRKGLLETKHLYLSQVVDEHTNNGECKNTTQEECFKFLKYLDISPHNSFIYYRGSEKYISYLPGLEEGVVSTEHGISNNIGIMPPVYDQIKLLGLQWWKDCVIEGIFPSRGAYGEECISNNNFIYPEYKNTEDIKYFFEFYGEAKAWEINVSDSKSGGNTKFSIDLALDLTEKRYLNRNKKNFEWLFDKMSINHIHIDKQLINNSSTFWDLSPPARVERNNTKSKLFSKCFSKDSSICRIEKRFTEGIKYLMENLFYEGEKIIIDNFPKSISYAFSDVSSVDEPSMGFHTTEEPLNNNKFGFDKKYRNVFLKYSVRSDGNRIVDAWNTRNKFKNFCLNCFVLPDAGSCTIRRKPLNINKLDFIIFMNWDISRNIFLFPRLIPHKCNRHYIFHFLIKYKKGLVIKINQFYLSITKSNHIYESNELPLGVEYATENFFHCIANHGTGTPSWYKSIINIKEFFFTDLKKSLSSSYLKYESIYFLKYWIDEGLQKGKSFNNIARNTINQHSLNGVKGVRKGFYFYKGNKYVNWNLNLYEWSDHRTNRNFKRSPKRFICGNNYLKIMSNRTEFFTNRNSRSWSGKLENNYSKFYFICKNSIKKGFNLSIFNKSEKINTLGNSPKIIDTKSIYSEMNPSQNHEFLQELGFPSDKESITPLILNEIPVSKFTIDSFYNRFNINVEYMKLSDETTFFAILRNKDIWFDPIKLSNKSLLKTYFDQAIIPKFLDHLLYIQPDHNKKWYFYFCNTEENIITDSKFTYGQLLSILPKHNNVFLSSFVGIEPSDSEENTILVTQPKVSNIFFKCLKRSYNQIFALVNNSYKLLILLNRINLLFHKKINTSFTEQFSTITLLTGKQVVNLEITYYRQPDIEIFNLGRKNVNNGLLDEKALSPNLSVIQRQSYKHDLFSESLLRIRNKNNKMFHWFKKLFLINDSAGDSRSVTGSRVIGGKSTKLILLNNSNLFVEEIKKNETLFLSSSSPHLNERARNAETYKIYQVDSVEKKNALFRKYTPWFFTLKWWKYFLQTFTGVLPNGISLNSSDQFEYVPQICAQDREISDDQPKKALLNFIWSYSKSINCWNDKYLIIISLFLSSYLFFQNYLFNLIGSDYTDLCKHFGIIRYLIDRKSYWNKLVYQHPVKSIDTQNRFVNFLKKIGHYAKKRKLDLFTMEELNAWLTTNQSLDIFPRKKELLIQSPITRKKIYRYGFNLIYNPHLLSNDFGYKTTQQGLYYLRYLAESFDKSLVNYPFYHFNLAHKWVFLAFWQRITSPHVSRQTNTLGFTSHGIPIPLRLGLSPSKGNLLVGPPETGRSYLIKNLAADSYVPSIQVSISELLYNEPDITTKDWNVLMDNLHQLALILELTKEMSPCIVWIQNIHELNSNCLTQDIKSNSNLPLGLLLTYFRTNFVKNHTLSMIAFASTHIPEKIDPSLIYPNRLDRLMNIRMLSIPQRQKEFYIFLRSKCFHLENNLSCLNEFGYGTMGYDVRDLASLVNEVSSISITYDESVIYDDTIRLAFHRQALGFAYADTNIEYGQNDEKLLYKVGKAIVQTIITKKFTMNPLYKGNNFWKKRFYYLSEWFSEPPITETTVKEFTILSHILECLAGSAARDSWFRSENEQENSIPLDKYADNDSDSACTTLESLLVEFPRLEIYQDESISNKMRLAPYSRTTNLVNIMQNINFPIQYKQKLSELVSNTACSPRIWRFSFACNNIFNRVERPNEFRIPYYIGLFGENIQTLSKYLQNDFNDARFAQYIMKQQSPHNRVLSKMRRISLQELECQLETMLLKEQFETLGIFSPVQYPIEYRISNKPLLFLGKRFVWDPTGLLSKDHHLAFPYQQLFVDEEMLRRFYVTYGTEREQGKSQSIQKIKQFFVRRGYSRDSMSNLYISGLKQFTFADKQNIETFKSTERIGVQLKHPHLFAAVYSYQPWLMEYSQEKFAHFDLLNNHQGWLEVNSSLSSYSSVHSTLFESHQYLLNSFRCNKMLLNQIIKLLLKNRWLFKNEIETLLVLSKGG.

1385–1392 (GPPETGRS) is a binding site for ATP.

It belongs to the Ycf2 family.

The protein localises to the plastid. It is found in the chloroplast stroma. In terms of biological role, probable ATPase of unknown function. Its presence in a non-photosynthetic plant (Epifagus virginiana) and experiments in tobacco indicate that it has an essential function which is probably not related to photosynthesis. In Huperzia lucidula (Shining clubmoss), this protein is Protein Ycf2.